The following is a 188-amino-acid chain: dCTP deaminase (188 aa).

DCTP is bound by residues 111 to 116 (KSTYAR), 135 to 137 (TLE), glutamine 156, tyrosine 170, and glutamine 180. The Proton donor/acceptor role is filled by glutamate 137.

Belongs to the dCTP deaminase family. Homotrimer.

The enzyme catalyses dCTP + H2O + H(+) = dUTP + NH4(+). The protein operates within pyrimidine metabolism; dUMP biosynthesis; dUMP from dCTP (dUTP route): step 1/2. Its function is as follows. Catalyzes the deamination of dCTP to dUTP. The sequence is that of dCTP deaminase from Legionella pneumophila (strain Paris).